We begin with the raw amino-acid sequence, 163 residues long: Phosphopantetheine adenylyltransferase (163 aa).

Thr9 contributes to the substrate binding site. Residues 9-10 (TF) and His17 each bind ATP. Substrate-binding residues include Lys41, Thr73, and Arg87. ATP contacts are provided by residues 88-90 (GLR), Glu98, and 123-129 (FSFISSS).

Belongs to the bacterial CoaD family. Homohexamer. It depends on Mg(2+) as a cofactor.

The protein resides in the cytoplasm. It catalyses the reaction (R)-4'-phosphopantetheine + ATP + H(+) = 3'-dephospho-CoA + diphosphate. It functions in the pathway cofactor biosynthesis; coenzyme A biosynthesis; CoA from (R)-pantothenate: step 4/5. In terms of biological role, reversibly transfers an adenylyl group from ATP to 4'-phosphopantetheine, yielding dephospho-CoA (dPCoA) and pyrophosphate. The sequence is that of Phosphopantetheine adenylyltransferase from Desulfitobacterium hafniense (strain Y51).